A 185-amino-acid polypeptide reads, in one-letter code: ATP synthase subunit delta (185 aa).

This sequence belongs to the ATPase delta chain family. As to quaternary structure, F-type ATPases have 2 components, F(1) - the catalytic core - and F(0) - the membrane proton channel. F(1) has five subunits: alpha(3), beta(3), gamma(1), delta(1), epsilon(1). CF(0) has four main subunits: a(1), b(1), b'(1) and c(10-14). The alpha and beta chains form an alternating ring which encloses part of the gamma chain. F(1) is attached to F(0) by a central stalk formed by the gamma and epsilon chains, while a peripheral stalk is formed by the delta, b and b' chains.

The protein resides in the cellular thylakoid membrane. Its function is as follows. F(1)F(0) ATP synthase produces ATP from ADP in the presence of a proton or sodium gradient. F-type ATPases consist of two structural domains, F(1) containing the extramembraneous catalytic core and F(0) containing the membrane proton channel, linked together by a central stalk and a peripheral stalk. During catalysis, ATP synthesis in the catalytic domain of F(1) is coupled via a rotary mechanism of the central stalk subunits to proton translocation. This protein is part of the stalk that links CF(0) to CF(1). It either transmits conformational changes from CF(0) to CF(1) or is implicated in proton conduction. Functionally, the complex from the organism is particularly stable to disruption and remains functional after 6 hrs at 55 degrees Celsius. In Thermosynechococcus vestitus (strain NIES-2133 / IAM M-273 / BP-1), this protein is ATP synthase subunit delta.